Reading from the N-terminus, the 225-residue chain is Uracil-DNA glycosylase (225 aa).

Asp-65 acts as the Proton acceptor in catalysis.

It belongs to the uracil-DNA glycosylase (UDG) superfamily. UNG family.

It is found in the cytoplasm. It catalyses the reaction Hydrolyzes single-stranded DNA or mismatched double-stranded DNA and polynucleotides, releasing free uracil.. Excises uracil residues from the DNA which can arise as a result of misincorporation of dUMP residues by DNA polymerase or due to deamination of cytosine. The protein is Uracil-DNA glycosylase of Clostridium beijerinckii (strain ATCC 51743 / NCIMB 8052) (Clostridium acetobutylicum).